We begin with the raw amino-acid sequence, 145 residues long: Snaclec salmorin subunit B (145 aa).

The N-terminal stretch at 1 to 23 (MGRFIFVSFGLLVVFVSLSGTGA) is a signal peptide. 3 disulfide bridges follow: C25/C36, C53/C141, and C118/C133. The C-type lectin domain occupies 32–142 (YEGHCYKLFN…CRMEAYFVCE (111 aa)). Ca(2+) is bound by residues S64 and E70. E142 is a binding site for Ca(2+).

It belongs to the snaclec family. Heterodimer of subunits A and B; disulfide-linked. In terms of tissue distribution, expressed by the venom gland.

The protein resides in the secreted. In terms of biological role, inhibits thrombin-induced fibrinogen clotting and factor Xa-induced prothrombin activation. Binds to thrombin and prothrombin exosites. The protein is Snaclec salmorin subunit B of Gloydius brevicauda (Korean slamosa snake).